Here is a 102-residue protein sequence, read N- to C-terminus: Monothiol glutaredoxin-S4 (102 aa).

The Glutaredoxin domain occupies 1-101 (MDKLQKMISE…PMLKRVGALW (101 aa)). Residue cysteine 21 coordinates [2Fe-2S] cluster. Residues 99-102 (ALWL) carry the Responsive for interaction with TGA factors motif.

The protein belongs to the glutaredoxin family. CC-type subfamily.

It localises to the cytoplasm. Its subcellular location is the nucleus. Functionally, may only reduce GSH-thiol disulfides, but not protein disulfides. The sequence is that of Monothiol glutaredoxin-S4 (GRXS4) from Arabidopsis thaliana (Mouse-ear cress).